We begin with the raw amino-acid sequence, 21 residues long: Chlorophyllase type 2 (21 aa).

Belongs to the AB hydrolase superfamily. Lipase family.

It carries out the reaction a chlorophyll + H2O = a chlorophyllide + phytol + H(+). Its pathway is porphyrin-containing compound metabolism; chlorophyll degradation. In terms of biological role, catalyzes the hydrolysis of ester bond in chlorophyll to yield chlorophyllide and phytol. The sequence is that of Chlorophyllase type 2 from Chenopodium album (Fat hen).